The sequence spans 313 residues: Meiotically up-regulated gene 100 protein, mitochondrial (313 aa).

The next 2 membrane-spanning stretches (helical) occupy residues 147–167 (VFDYLFFLYGLSGTSILYTAG) and 178–198 (SGFITPFFQLLLLVLLFTLTF).

It localises to the mitochondrion inner membrane. Functionally, has a role in meiosis. This is Meiotically up-regulated gene 100 protein, mitochondrial (mug100) from Schizosaccharomyces pombe (strain 972 / ATCC 24843) (Fission yeast).